The chain runs to 378 residues: UPF0754 membrane protein BT9727_0767 (378 aa).

Helical transmembrane passes span 1–21 (MNIWLSMLTTTGLGAIIGGFT) and 357–377 (YLGALLGGMIGIVQGLLLLFL).

This sequence belongs to the UPF0754 family.

The protein resides in the cell membrane. The protein is UPF0754 membrane protein BT9727_0767 of Bacillus thuringiensis subsp. konkukian (strain 97-27).